The chain runs to 255 residues: Large ribosomal subunit protein uL4 (255 aa).

It belongs to the universal ribosomal protein uL4 family. In terms of assembly, part of the 50S ribosomal subunit.

In terms of biological role, one of the primary rRNA binding proteins, this protein initially binds near the 5'-end of the 23S rRNA. It is important during the early stages of 50S assembly. It makes multiple contacts with different domains of the 23S rRNA in the assembled 50S subunit and ribosome. Functionally, forms part of the polypeptide exit tunnel. This Pyrococcus horikoshii (strain ATCC 700860 / DSM 12428 / JCM 9974 / NBRC 100139 / OT-3) protein is Large ribosomal subunit protein uL4.